Consider the following 105-residue polypeptide: Endogenous retrovirus group K member 104 Rec protein (105 aa).

Residues 1–43 form a disordered region; it reads MNPSEMQRKAPPRRRRHCNRAPLTHKMNKMVTSEEEMKLPSTK. The span at 10-19 shows a compositional bias: basic residues; that stretch reads APPRRRRHCN. Positions 13–20 match the Nuclear localization signal motif; the sequence is RRRRHCNR. The Nuclear export signal signature appears at 50–59; it reads WAQLKKLTQL.

In terms of assembly, forms homodimers, homotrimers, and homotetramers via a C-terminal domain. Associates with XPO1 and with ZNF145.

Its subcellular location is the cytoplasm. The protein resides in the nucleus. It is found in the nucleolus. Its function is as follows. Retroviral replication requires the nuclear export and translation of unspliced, singly-spliced and multiply-spliced derivatives of the initial genomic transcript. Rec interacts with a highly structured RNA element (RcRE) present in the viral 3'LTR and recruits the cellular nuclear export machinery. This permits export to the cytoplasm of unspliced genomic or incompletely spliced subgenomic viral transcripts. In Homo sapiens (Human), this protein is Endogenous retrovirus group K member 104 Rec protein (HERV-K104).